A 92-amino-acid polypeptide reads, in one-letter code: Acylphosphatase (92 aa).

The Acylphosphatase-like domain occupies 3 to 90 (RVHVLVAGRV…GEFTEFAVLR (88 aa)). Catalysis depends on residues arginine 18 and asparagine 36.

Belongs to the acylphosphatase family.

It carries out the reaction an acyl phosphate + H2O = a carboxylate + phosphate + H(+). This is Acylphosphatase (acyP) from Methylococcus capsulatus (strain ATCC 33009 / NCIMB 11132 / Bath).